Consider the following 30-residue polypeptide: Brevinin-2Ej (30 aa).

Residues Cys-24 and Cys-30 are joined by a disulfide bond.

Expressed by the skin glands.

The protein localises to the secreted. In terms of biological role, shows antibacterial activity against representative Gram-negative and Gram-positive bacterial species, and hemolytic activity. This chain is Brevinin-2Ej, found in Pelophylax ridibundus (Marsh frog).